A 231-amino-acid polypeptide reads, in one-letter code: UPF0758 protein YsxA (231 aa).

The 123-residue stretch at 109–231 (VIRSPEDGAN…FVSLKEKGYL (123 aa)) folds into the MPN domain. Positions 180, 182, and 193 each coordinate Zn(2+). Positions 180–193 (HNHPSGDPTPSRED) match the JAMM motif motif.

This sequence belongs to the UPF0758 family.

The sequence is that of UPF0758 protein YsxA (ysxA) from Bacillus subtilis (strain 168).